The primary structure comprises 492 residues: Membrane-bound glycerophospholipid O-acyltransferase 1 (492 aa).

A run of 6 helical transmembrane segments spans residues 33 to 53 (VNFV…RIYL), 69 to 89 (ILGI…LFVL), 125 to 145 (IYIF…MIVT), 179 to 199 (PSLL…AGPC), 237 to 257 (MGAV…FLTL), and 296 to 316 (YFAW…FNGM). Residues Asn-349 and His-380 contribute to the active site. The next 3 membrane-spanning stretches (helical) occupy residues 370 to 390 (VLTF…YFTF), 423 to 443 (VVTW…FVML), and 452 to 472 (YKSV…FLPI). Ser-486 bears the Phosphoserine mark.

Belongs to the membrane-bound acyltransferase family. As to expression, highly expressed in stomach, epididymis, and colon.

The protein localises to the endoplasmic reticulum membrane. It catalyses the reaction a 1-acyl-sn-glycero-3-phosphoethanolamine + an acyl-CoA = a 1,2-diacyl-sn-glycero-3-phosphoethanolamine + CoA. The catalysed reaction is a 1-acyl-sn-glycero-3-phospho-L-serine + an acyl-CoA = a 1,2-diacyl-sn-glycero-3-phospho-L-serine + CoA. The enzyme catalyses a 1-acyl-sn-glycero-3-phosphocholine + an acyl-CoA = a 1,2-diacyl-sn-glycero-3-phosphocholine + CoA. It carries out the reaction a 1-O-(1Z-alkenyl)-sn-glycero-3-phosphoethanolamine + (9Z)-octadecenoyl-CoA = 1-O-(1Z)-alkenyl-2-(9Z)-octadecenoyl-sn-glycero-3-phosphoethanolamine + CoA. It catalyses the reaction 1-octadecanoyl-sn-glycero-3-phosphoethanolamine + (9Z)-octadecenoyl-CoA = 1-octadecanoyl-2-(9Z-octadecenoyl)-sn-glycero-3-phosphoethanolamine + CoA. The catalysed reaction is 1-(9Z-octadecenoyl)-sn-glycero-3-phospho-L-serine + (9Z)-octadecenoyl-CoA = 1,2-di-(9Z)-octadecenoyl-sn-glycero-3-phospho-L-serine + CoA. The enzyme catalyses 1-(9Z-octadecenoyl)-sn-glycero-3-phosphoethanolamine + (9Z)-octadecenoyl-CoA = 1,2-di-(9Z-octadecenoyl)-sn-glycero-3-phosphoethanolamine + CoA. It carries out the reaction 1-hexadecanoyl-sn-glycero-3-phosphoethanolamine + (9Z)-octadecenoyl-CoA = 1-hexadecanoyl-2-(9Z-octadecenoyl)-sn-glycero-3-phosphoethanolamine + CoA. It catalyses the reaction 1-(10Z-heptadecenoyl)-sn-glycero-3-phosphoethanolamine + hexadecanoyl-CoA = 1-(10Z-heptadecenoyl)-2-hexadecanoyl-sn-glycero-3-phosphoethanolamine + CoA. The catalysed reaction is 1-(9Z-octadecenoyl)-sn-glycero-3-phospho-L-serine + octadecanoyl-CoA = 1-(9Z-octadecenoyl)-2-octadecanoyl-sn-glycero-3-phospho-L-serine + CoA. The enzyme catalyses 1-(9Z-octadecenoyl)-sn-glycero-3-phospho-L-serine + (9Z)-hexadecenoyl-CoA = 1-(9Z-octadecenoyl)-2-(9Z-hexadecenoyl)-sn-glycero-3-phospho-L-serine + CoA. It carries out the reaction 1-(9Z-octadecenoyl)-sn-glycero-3-phospho-L-serine + (9Z,12Z)-octadecadienoyl-CoA = 1-(9Z-octadecenoyl)-2-(9Z,12Z-octadienoyl)-sn-glycero-3-phospho-L-serine + CoA. It catalyses the reaction 1-hexadecanoyl-sn-glycero-3-phosphocholine + (9Z)-octadecenoyl-CoA = 1-hexadecanoyl-2-(9Z-octadecenoyl)-sn-glycero-3-phosphocholine + CoA. The catalysed reaction is 1-(10Z-heptadecenoyl)-sn-glycero-3-phosphoethanolamine + (9Z)-octadecenoyl-CoA = 1-(10Z-heptadecenoyl)-2-(9Z-octadecenoyl)-sn-glycero-3-phosphoethanolamine + CoA. It participates in lipid metabolism; phospholipid metabolism. Functionally, acyltransferase which catalyzes the transfer of an acyl group from an acyl-CoA towards a lysophospholipid producing a phospholipid and participates in the reacylation step of the phospholipid remodeling pathway also known as the Lands cycle. Acts on lysophosphatidylserine (1-acyl-2-hydroxy-sn-glycero-3-phospho-L-serine or LPS) and lysophosphatidylethanolamine (1-acyl-sn-glycero-3-phosphoethanolamine or LPE), and to a lesser extend lysophosphatidylcholine. Prefers oleoyl-CoA as the acyl donor and 1-oleoyl-LPE as acceptor. May play a role in neurite outgrowth during neuronal differentiation. The chain is Membrane-bound glycerophospholipid O-acyltransferase 1 from Mus musculus (Mouse).